The sequence spans 278 residues: HTH-type transcriptional activator RhaS (278 aa).

The 99-residue stretch at 174-272 (NLLLAWLEDH…NWSPRDIRQG (99 aa)) folds into the HTH araC/xylS-type domain. 2 DNA-binding regions (H-T-H motif) span residues 191-212 (DAVADQFSLSLRTLHRQLKQKT) and 239-262 (VTDIAYRCGFSDSNHFSTLFRREF).

Binds DNA as a dimer.

The protein localises to the cytoplasm. Activates expression of the rhaBAD and rhaT operons. This chain is HTH-type transcriptional activator RhaS, found in Escherichia coli O45:K1 (strain S88 / ExPEC).